The following is a 431-amino-acid chain: Dihydroorotase (431 aa).

H59 and H61 together coordinate Zn(2+). Residues 61-63 and N93 each bind substrate; that span reads HLR. Zn(2+) is bound by residues D151, H178, H231, and D304. D304 is an active-site residue. Substrate is bound by residues H308 and 322–323; that span reads FG.

It belongs to the metallo-dependent hydrolases superfamily. DHOase family. Class I DHOase subfamily. It depends on Zn(2+) as a cofactor.

The catalysed reaction is (S)-dihydroorotate + H2O = N-carbamoyl-L-aspartate + H(+). Its pathway is pyrimidine metabolism; UMP biosynthesis via de novo pathway; (S)-dihydroorotate from bicarbonate: step 3/3. In terms of biological role, catalyzes the reversible cyclization of carbamoyl aspartate to dihydroorotate. This is Dihydroorotase from Thermoanaerobacter sp. (strain X514).